The primary structure comprises 419 residues: Acetyltransferase fsoF (419 aa).

Residue Asn2 is glycosylated (N-linked (GlcNAc...) asparagine). Transmembrane regions (helical) follow at residues 4 to 24 (TIISLALIFFQLTTTALVVGF) and 62 to 82 (AFLGAASVFLVILYVDAAILS). The disordered stretch occupies residues 89–114 (QSPTSSLGGLIPPTTRDTPKTQNNAT). N-linked (GlcNAc...) asparagine glycosylation is found at Asn112 and Asn169. 4 consecutive transmembrane segments (helical) span residues 230 to 250 (YWAIQYAVIDLLYSLLAVVAV), 314 to 334 (YVFMTLVFAVSGVFHTLSDVS), 337 to 357 (IPLGESGAMRFFVLQAIGIML), and 386 to 406 (VSGPVWLVTWLTWTSPGWIYM).

It belongs to the wax synthase family.

It localises to the membrane. It catalyses the reaction 3-O-(beta-D-glucopyranosyl)-2alpha-hydroxyisomotiol + acetyl-CoA = 3-O-(beta-D-glucopyranosyl)-2alpha-acetoxyisomotiol + CoA. The catalysed reaction is 2-deacetylfuscoatroside + acetyl-CoA = fuscoatroside + CoA. The protein operates within secondary metabolite biosynthesis; terpenoid biosynthesis. In terms of biological role, terpene cyclase-glycosyl transferase fusion protein; part of the gene cluster that mediates the biosynthesis of the enfumafungin-type antibiotic, fuscoatroside. Within the pathway, fsoF catalyzes the acetylation of C2-alpha-OH following the C2 hydroxylation by the cytochrome monooxygenase fsoD. The fuscoatroside biosynthesis is initiated by the cyclization of 2,3(S)-oxidosqualene through FsoA's terpene cyclase (TC) domain, leading to the formation of the fernane skeleton isomotiol, harboring a fernane triterpene skeleton with a C8-C9 double bond. Subsequently, C2-alpha-hydroxylation mediated by fsoD results in the production of 2-alpha-hydroxy-isomotiol, which is further acetylated by fsoF. The glycosyltransferase (GT) domain of FsoA may convert isomotiol, 2-alpha-hydroxy-isomotiol, and the acetylated derivative of 2-alpha-hydroxy-isomotiol into their corresponding glycosides 3-O-(beta-D-glucopyranosyl)-isomotiol, 3-O-(beta-D-glucopyranosyl)-2-alpha-hydroxy-isomotiol, and 3-O-(beta-D-glucopyranosyl)-2-alpha-acetoxy-isomotiol, which then undergo oxidative cleavage under the action of fsoE to form s 2-deacetoxy-fuscoatroside, 2-deacetyl-fuscoatroside, and fuscoatroside, respectively. Although hydroxylation followed by acetylation of 3-O-(beta-D-glucopyranosyl)-isomotiol and 2-deacetoxy-fuscoatroside by fsoD and fsoF could not be ruled out, this process is likely to occur with difficulty due to bulky steric hindrance caused by the presence of a glycan at C3 in these compounds. Interestingly, fsoE can also utilize the aglycones isomotiol and 2-alpha-hydroxy-isomotiol as substrates to generate 19-beta-hydroxy-isomotiol and 2-alpha,19-beta-dihydroxy-isomotiol, respectively. These reactions occur with lower efficiency. Finally, fsoE can further convert 2-alpha,19-beta-dihydroxy-isomotiol into 2-alpha-hydroxy-ismotiol-19-one and 2-alpha-hydroxy-ismotiol-19-one into 2-deacetyl-3-deglucopyranosyl-fuscoatroside. The protein is Acetyltransferase fsoF of Humicola fuscoatra.